Consider the following 180-residue polypeptide: Adenine phosphoribosyltransferase (180 aa).

It belongs to the purine/pyrimidine phosphoribosyltransferase family. As to quaternary structure, homodimer.

Its subcellular location is the cytoplasm. It carries out the reaction AMP + diphosphate = 5-phospho-alpha-D-ribose 1-diphosphate + adenine. It functions in the pathway purine metabolism; AMP biosynthesis via salvage pathway; AMP from adenine: step 1/1. Catalyzes a salvage reaction resulting in the formation of AMP, that is energically less costly than de novo synthesis. The sequence is that of Adenine phosphoribosyltransferase from Mycolicibacterium paratuberculosis (strain ATCC BAA-968 / K-10) (Mycobacterium paratuberculosis).